A 652-amino-acid polypeptide reads, in one-letter code: DNA ligase (652 aa).

Residues 29-33, 78-79, and Glu-107 each bind NAD(+); these read DSDYD and SL. Catalysis depends on Lys-109, which acts as the N6-AMP-lysine intermediate. NAD(+) is bound by residues Arg-130, Glu-164, Lys-278, and Lys-302. Cys-395, Cys-398, Cys-413, and Cys-418 together coordinate Zn(2+). The 76-residue stretch at 577–652 folds into the BRCT domain; it reads NSDAALFGLT…IEDEDWLRKL (76 aa).

The protein belongs to the NAD-dependent DNA ligase family. LigA subfamily. Mg(2+) is required as a cofactor. Mn(2+) serves as cofactor.

The catalysed reaction is NAD(+) + (deoxyribonucleotide)n-3'-hydroxyl + 5'-phospho-(deoxyribonucleotide)m = (deoxyribonucleotide)n+m + AMP + beta-nicotinamide D-nucleotide.. DNA ligase that catalyzes the formation of phosphodiester linkages between 5'-phosphoryl and 3'-hydroxyl groups in double-stranded DNA using NAD as a coenzyme and as the energy source for the reaction. It is essential for DNA replication and repair of damaged DNA. The sequence is that of DNA ligase from Streptococcus pyogenes serotype M18 (strain MGAS8232).